We begin with the raw amino-acid sequence, 336 residues long: P2Y purinoceptor 13 (336 aa).

Over 1-32 (MLGTVNTTGMQGFNKSERCPRDTRMTQLLFPV) the chain is Extracellular. Residues Asn6 and Asn14 are each glycosylated (N-linked (GlcNAc...) asparagine). Residues 33–53 (LYTVVFFTGVLLNTLALWVFI) traverse the membrane as a helical segment. Residues 54-60 (HIPSNST) lie on the Cytoplasmic side of the membrane. The helical transmembrane segment at 61–81 (FIIYLKNTLVADLIMTLMLPF) threads the bilayer. At 82-100 (KILSDSRLAPWQLRGFVCT) the chain is on the extracellular side. A disulfide bond links Cys99 and Cys176. A helical transmembrane segment spans residues 101 to 121 (FSSVVFYETMYVGIMMLGLIA). Topologically, residues 122–144 (FDRFLKIVVPFRKTFVKKTAFAK) are cytoplasmic. Residues 145-165 (IVSISIWLLMFLISLPNMILN) form a helical membrane-spanning segment. Over 166–193 (KEATASTVKKCASLKSPLGLLWHQVVSH) the chain is Extracellular. The helical transmembrane segment at 194-214 (TCQFIFWTVFILMLLFYTVIA) threads the bilayer. The Cytoplasmic segment spans residues 215-237 (KKVYDSYRKFKSRDSKHKRLEAK). The chain crosses the membrane as a helical span at residues 238-258 (VFIVMAVFFVCFAPFHFVRVP). Topologically, residues 259 to 281 (YTHSQTTNKTDCRLENQLFLAKE) are extracellular. N-linked (GlcNAc...) asparagine glycosylation is present at Asn266. Residues 282-302 (STLFLATTNICMDPLIYIILC) traverse the membrane as a helical segment. At 303–336 (KKFTRKVPCMRWRTKTAASSDEHHSSQTDNITLS) the chain is on the cytoplasmic side.

Belongs to the G-protein coupled receptor 1 family. Highest levels in spleen, liver brain and kidney. Lower but significant level are also detected in intestine, stomach, skeletal muscle, testis, heart and lung.

It is found in the cell membrane. Receptor for ADP. Coupled to G(i)-proteins. May play a role in hematopoiesis and the immune system. The protein is P2Y purinoceptor 13 (P2ry13) of Rattus norvegicus (Rat).